We begin with the raw amino-acid sequence, 1238 residues long: Multifunctional 2-oxoglutarate metabolism enzyme (1238 aa).

Positions 1–41 (MANISSPFGQNEWLVEEMYRKFRDDPSSVDPSWHEFLVDYN) are 2-oxoglutarate dehydrogenase E1, N-terminal part. The interval 42–97 (PESTAEPVLTDPTSTDKQPSATPQAKPAAAADPVASRAKPATTPTVANGTAAGSAA) is linker. The segment at 44-108 (STAEPVLTDP…PAKTTTTPPI (65 aa)) is disordered. Positions 59–107 (QPSATPQAKPAAAADPVASRAKPATTPTVANGTAAGSAAAPAKTTTTPP) are enriched in low complexity. Residues 98–346 (APAKTTTTPP…LRTIHEMVLS (249 aa)) form a succinyltransferase E2 region. The Proton acceptor; for succinyltransferase activity role is filled by histidine 325. The interval 347–1238 (DSFWDEIFRE…QQEILDTAFG (892 aa)) is 2-oxoglutarate dehydrogenase E1, C-terminal part. Arginine 551 contacts thiamine diphosphate. Histidine 590 and serine 615 together coordinate 2-oxoglutarate. Thiamine diphosphate is bound by residues serine 615, leucine 617, aspartate 657, alanine 658, alanine 659, and asparagine 690. Position 657 (aspartate 657) interacts with Mg(2+). 2 residues coordinate Mg(2+): asparagine 690 and isoleucine 692. Positions 795-825 (DISLKEAEDALRDYQGQLERVFNEVRDLEKH) form a coiled coil. Histidine 1032 is a 2-oxoglutarate binding site. Residues threonine 1050, arginine 1066, lysine 1101, serine 1104, glutamine 1154, arginine 1161, and arginine 1162 each coordinate acetyl-CoA.

This sequence belongs to the 2-oxoacid dehydrogenase family. Kgd subfamily. In terms of assembly, homodimer. The 2-oxoglutarate dehydrogenase (ODH) complex contains multiple copies of three enzymatic components: 2-oxoglutarate dehydrogenase (E1), dihydrolipoamide succinyltransferase (E2) and lipoamide dehydrogenase (E3). Mg(2+) serves as cofactor. It depends on thiamine diphosphate as a cofactor.

The enzyme catalyses glyoxylate + 2-oxoglutarate + H(+) = 2-hydroxy-3-oxoadipate + CO2. It catalyses the reaction 2-oxoglutarate + H(+) = succinate semialdehyde + CO2. It carries out the reaction N(6)-[(R)-lipoyl]-L-lysyl-[protein] + 2-oxoglutarate + H(+) = N(6)-[(R)-S(8)-succinyldihydrolipoyl]-L-lysyl-[protein] + CO2. The catalysed reaction is N(6)-[(R)-dihydrolipoyl]-L-lysyl-[protein] + succinyl-CoA = N(6)-[(R)-S(8)-succinyldihydrolipoyl]-L-lysyl-[protein] + CoA. The protein operates within carbohydrate metabolism; tricarboxylic acid cycle; succinate from 2-oxoglutarate (transferase route): step 1/2. Its pathway is carbohydrate metabolism; tricarboxylic acid cycle; succinyl-CoA from 2-oxoglutarate (dehydrogenase route): step 1/1. Its activity is regulated as follows. Alpha-ketoglutarate dehydrogenase and decarboxylase activities are inhibited by unphosphorylated GarA, and allosterically activated by acetyl-CoA, the main substrate of the TCA cycle. In terms of biological role, shows three enzymatic activities that share a first common step, the attack of thiamine-PP on 2-oxoglutarate (alpha-ketoglutarate, KG), leading to the formation of an enamine-thiamine-PP intermediate upon decarboxylation. Thus, displays KGD activity, catalyzing the decarboxylation from five-carbon 2-oxoglutarate to four-carbon succinate semialdehyde (SSA). Also catalyzes C-C bond formation between the activated aldehyde formed after decarboxylation of alpha-ketoglutarate and the carbonyl of glyoxylate (GLX), to yield 2-hydroxy-3-oxoadipate (HOA), which spontaneously decarboxylates to form 5-hydroxylevulinate (HLA). And is also a component of the 2-oxoglutarate dehydrogenase (ODH) complex, that catalyzes the overall conversion of 2-oxoglutarate to succinyl-CoA and CO(2). The KG decarboxylase and KG dehydrogenase reactions provide two alternative, tightly regulated, pathways connecting the oxidative and reductive branches of the TCA cycle. The chain is Multifunctional 2-oxoglutarate metabolism enzyme (kgd) from Mycobacterium leprae (strain TN).